The sequence spans 503 residues: AMP phosphorylase (503 aa).

Residues glycine 168, 194–199, and threonine 203 each bind AMP; that span reads SRAITS. Residue aspartate 256 is the Proton donor of the active site. The AMP site is built by serine 264 and lysine 288.

It belongs to the thymidine/pyrimidine-nucleoside phosphorylase family. Type 2 subfamily.

It carries out the reaction AMP + phosphate = alpha-D-ribose 1,5-bisphosphate + adenine. It catalyses the reaction CMP + phosphate = cytosine + alpha-D-ribose 1,5-bisphosphate. The catalysed reaction is UMP + phosphate = alpha-D-ribose 1,5-bisphosphate + uracil. Functionally, catalyzes the conversion of AMP and phosphate to adenine and ribose 1,5-bisphosphate (R15P). Exhibits phosphorylase activity toward CMP and UMP in addition to AMP. Functions in an archaeal AMP degradation pathway, together with R15P isomerase and RubisCO. In Pyrococcus abyssi (strain GE5 / Orsay), this protein is AMP phosphorylase (deoA).